The sequence spans 310 residues: Serine/threonine-protein kinase pim-2 (310 aa).

The 261-residue stretch at 30–290 folds into the Protein kinase domain; sequence YTMGNLLGSG…LEQILQHPWM (261 aa). ATP-binding positions include 36-44 and Lys59; that span reads LGSGGFGSV. Residue Asp167 is the Proton acceptor of the active site.

Belongs to the protein kinase superfamily. CAMK Ser/Thr protein kinase family. PIM subfamily. Post-translationally, autophosphorylated.

The catalysed reaction is L-seryl-[protein] + ATP = O-phospho-L-seryl-[protein] + ADP + H(+). The enzyme catalyses L-threonyl-[protein] + ATP = O-phospho-L-threonyl-[protein] + ADP + H(+). Functionally, proto-oncogene with serine/threonine kinase activity involved in cell survival and cell proliferation. The chain is Serine/threonine-protein kinase pim-2 (pim2) from Danio rerio (Zebrafish).